Consider the following 654-residue polypeptide: DNA-directed RNA polymerase III subunit RPC3 (654 aa).

A Phosphothreonine modification is found at Thr-27. 2 disordered regions span residues 381 to 401 (LSRK…ASLP) and 422 to 448 (KSLQ…EDPH). Ser-392 and Ser-394 each carry phosphoserine. Residues 429–444 (DTQEEDEEEEDLDADT) are compositionally biased toward acidic residues. Positions 581–602 (LEWNMANLLFKKEKLKQENSTL) are leucine-zipper.

The protein belongs to the RNA polymerase beta chain family. In terms of assembly, component of the RNA polymerase III (Pol III) complex consisting of 17 subunits.

Its subcellular location is the cytoplasm. It is found in the nucleus. Functionally, DNA-dependent RNA polymerase catalyzes the transcription of DNA into RNA using the four ribonucleoside triphosphates as substrates. Specific core component of RNA polymerase III which synthesizes small RNAs, such as 5S rRNA and tRNAs. The sequence is that of DNA-directed RNA polymerase III subunit RPC3 (RPC82) from Saccharomyces cerevisiae (strain YJM789) (Baker's yeast).